A 197-amino-acid polypeptide reads, in one-letter code: DnaJ homolog subfamily C member 5 (197 aa).

In terms of domain architecture, J spans 13–82 (GESLYHVLGL…RNIYDKYGSL (70 aa)). The segment at 153 to 197 (EDLEAQMQSDERDTEGPVLVQPASATETTQLTSDSHASYHTDGFN) is disordered. Residues 175-197 (ASATETTQLTSDSHASYHTDGFN) are compositionally biased toward polar residues.

Palmitoylated. Palmitoylation occurs probably in the cysteine-rich domain and regulates DNAJC5 stable membrane attachment.

It is found in the cytoplasm. It localises to the cytosol. The protein localises to the membrane. The protein resides in the cytoplasmic vesicle. Its subcellular location is the secretory vesicle. It is found in the chromaffin granule membrane. It localises to the melanosome. The protein localises to the cell membrane. May have an important role in presynaptic function. May be involved in calcium-dependent neurotransmitter release at nerve endings. This is DnaJ homolog subfamily C member 5 from Xenopus laevis (African clawed frog).